The sequence spans 160 residues: SsrA-binding protein (160 aa).

It belongs to the SmpB family.

It localises to the cytoplasm. In terms of biological role, required for rescue of stalled ribosomes mediated by trans-translation. Binds to transfer-messenger RNA (tmRNA), required for stable association of tmRNA with ribosomes. tmRNA and SmpB together mimic tRNA shape, replacing the anticodon stem-loop with SmpB. tmRNA is encoded by the ssrA gene; the 2 termini fold to resemble tRNA(Ala) and it encodes a 'tag peptide', a short internal open reading frame. During trans-translation Ala-aminoacylated tmRNA acts like a tRNA, entering the A-site of stalled ribosomes, displacing the stalled mRNA. The ribosome then switches to translate the ORF on the tmRNA; the nascent peptide is terminated with the 'tag peptide' encoded by the tmRNA and targeted for degradation. The ribosome is freed to recommence translation, which seems to be the essential function of trans-translation. In Pectobacterium carotovorum subsp. carotovorum (strain PC1), this protein is SsrA-binding protein.